Reading from the N-terminus, the 265-residue chain is Hydroxyethylthiazole kinase (265 aa).

A substrate-binding site is contributed by M50. ATP-binding residues include R125 and T171. G198 is a binding site for substrate.

This sequence belongs to the Thz kinase family. The cofactor is Mg(2+).

The enzyme catalyses 5-(2-hydroxyethyl)-4-methylthiazole + ATP = 4-methyl-5-(2-phosphooxyethyl)-thiazole + ADP + H(+). The protein operates within cofactor biosynthesis; thiamine diphosphate biosynthesis; 4-methyl-5-(2-phosphoethyl)-thiazole from 5-(2-hydroxyethyl)-4-methylthiazole: step 1/1. Catalyzes the phosphorylation of the hydroxyl group of 4-methyl-5-beta-hydroxyethylthiazole (THZ). The polypeptide is Hydroxyethylthiazole kinase (Cronobacter sakazakii (strain ATCC BAA-894) (Enterobacter sakazakii)).